A 482-amino-acid chain; its full sequence is MSISSILLSLFFILNILLAIIVIFKERRDASASWAWLLVLFFIPVLGFILYLLFGHNLRRKHLFQWEDRKKIGIERLLKHQLEDLETKQFQFNNRATFDNKDLIYMLIMNNHAVFTEDNSVDVITDGRDKFQRLLSDISKAKDHIHLQYYIYKGDELGKKLRDALIQKAKEGVQVRVLYDELGSRTLRKKFFKELREAGGHVEVFFPSKLRPINLRLNYRNHRKLVIIDGMTGYVGGFNVGDEYLGLNPKFGYWRDTHIRLQGTAVHAIQTRFILDWNQASHHHTLTYIPNHFPDYGPKGNVGMQIVTSGPDSEWEQIKNGYIKMISNAKRSILIQTPYFIPDASLLDALRIACLSGIDVNIMIPNKPDHAFVYWATLSYIGDLLKAGATVYIYDNGFIHAKTIVVDDEIASVGTANIDVRSFRLNFEVNAFIYDITIAKKLVSTFKEDLLVSRKFTYEEYLQRPLWIRIKESVSRLLSPIL.

Helical transmembrane passes span 3 to 23 (ISSILLSLFFILNILLAIIVI) and 34 to 54 (WAWLLVLFFIPVLGFILYLLF). PLD phosphodiesterase domains are found at residues 217 to 244 (LNYRNHRKLVIIDGMTGYVGGFNVGDEY) and 395 to 422 (DNGFIHAKTIVVDDEIASVGTANIDVRS). Active-site residues include His222, Lys224, Asp229, His400, Lys402, and Asp407.

The protein belongs to the phospholipase D family. Cardiolipin synthase subfamily.

The protein resides in the cell membrane. The catalysed reaction is 2 a 1,2-diacyl-sn-glycero-3-phospho-(1'-sn-glycerol) = a cardiolipin + glycerol. Catalyzes the reversible phosphatidyl group transfer from one phosphatidylglycerol molecule to another to form cardiolipin (CL) (diphosphatidylglycerol) and glycerol. This is Major cardiolipin synthase ClsA (clsA) from Bacillus subtilis (strain 168).